We begin with the raw amino-acid sequence, 113 residues long: UPF0482 protein YnfB (113 aa).

Positions 1-28 are cleaved as a signal peptide; that stretch reads MNNTLSKRLCLTAMLTLAAVVYTTSAFA.

This sequence belongs to the UPF0482 family.

The polypeptide is UPF0482 protein YnfB (Salmonella agona (strain SL483)).